The chain runs to 538 residues: Phosphoenolpyruvate carboxykinase (ATP) (538 aa).

Substrate contacts are provided by Arg61, Tyr195, and Lys201. Residues Lys201, His220, and 236–244 (GLSGTGKTT) contribute to the ATP site. 2 residues coordinate Mn(2+): Lys201 and His220. Position 257 (Asp257) interacts with Mn(2+). ATP is bound by residues Glu285, Arg323, and Thr449. Arg323 lines the substrate pocket.

This sequence belongs to the phosphoenolpyruvate carboxykinase (ATP) family. Mn(2+) is required as a cofactor.

It localises to the cytoplasm. It carries out the reaction oxaloacetate + ATP = phosphoenolpyruvate + ADP + CO2. It participates in carbohydrate biosynthesis; gluconeogenesis. Its function is as follows. Involved in the gluconeogenesis. Catalyzes the conversion of oxaloacetate (OAA) to phosphoenolpyruvate (PEP) through direct phosphoryl transfer between the nucleoside triphosphate and OAA. The polypeptide is Phosphoenolpyruvate carboxykinase (ATP) (Nitrobacter winogradskyi (strain ATCC 25391 / DSM 10237 / CIP 104748 / NCIMB 11846 / Nb-255)).